A 559-amino-acid chain; its full sequence is Potassium-transporting ATPase potassium-binding subunit (559 aa).

The next 13 helical transmembrane spans lie at 5–25, 27–47, 63–83, 132–152, 170–190, 253–273, 283–303, 327–347, 356–376, 379–399, 416–436, 484–504, and 524–544; these read GFLL…PLGS, LARL…RILW, LLAL…LLFW, GLTV…FALI, LVRI…LFFI, LAQM…FGEA, LLWA…WAEV, FGVL…CGAV, ALGG…FGGV, GLYG…LMIG, MTAL…ALAM, LLAF…MAIA, and GALF…LTFI.

This sequence belongs to the KdpA family. As to quaternary structure, the system is composed of three essential subunits: KdpA, KdpB and KdpC.

It localises to the cell inner membrane. Its function is as follows. Part of the high-affinity ATP-driven potassium transport (or Kdp) system, which catalyzes the hydrolysis of ATP coupled with the electrogenic transport of potassium into the cytoplasm. This subunit binds the periplasmic potassium ions and delivers the ions to the membrane domain of KdpB through an intramembrane tunnel. The chain is Potassium-transporting ATPase potassium-binding subunit from Salmonella newport (strain SL254).